A 748-amino-acid polypeptide reads, in one-letter code: Chondroadherin-like protein (748 aa).

An N-terminal signal peptide occupies residues 1 to 29 (MERPQSSIWVFMLLLFMVLLQSPAWHVAA). The LRRNT 1 domain maps to 30-61 (QRCPQTCVCDNSRRHVTCRHQNLTEVPNTIPE). N51 carries an N-linked (GlcNAc...) asparagine glycan. LRR repeat units lie at residues 85–107 (PHLT…AFRG), 108–131 (LGRL…ALDG), 132–155 (LGSL…TFGA), 156–179 (LGSL…AFQG), 181–203 (LRTR…ALAG), 204–227 (LPAL…ALSQ), 229–252 (RSLA…GLAL), 253–275 (PGLR…AFAH), and 276–299 (CPRL…QVPG). Residues 309-357 (NPLWCACHARPLLEWLVRARVRSDGACRGPRRLRGEALDTLRPSDLRCP) enclose the LRRCT 1 domain. The interval 352–389 (SDLRCPGDAAAGDGDGDEDEDRPAGPRAPPLRSPHGEA) is disordered. Residues 394 to 428 (PCPPACACVAETRHSTCDGRGLQAVPRGFPNDTQL) form the LRRNT 2 domain. A disulfide bridge links C395 with C410. 10 LRR repeats span residues 423-446 (PNDT…AFPG), 448-470 (RHLV…ALAG), 471-494 (LDRL…ALEG), 496-518 (PNLG…ALRA), 519-542 (LPTL…DLAG), 544-566 (RALR…ALGP), 567-590 (AREL…ALEG), 591-614 (LPAL…AFQP), 616-639 (GRSL…AFSG), and 641-665 (GKGL…GLSG). The N-linked (GlcNAc...) asparagine glycan is linked to N625. The region spanning 674–722 (NPFHCDCQLLPLHRWLTGLNLRVGATCATPPSVRGQKVKVAAPVFEACP) is the LRRCT 2 domain. Disulfide bonds link C678–C721 and C680–C700. A disordered region spans residues 728-748 (KAKRTPTSRGSARRTPSLSRH). Over residues 734-748 (TSRGSARRTPSLSRH) the composition is skewed to polar residues.

It belongs to the small leucine-rich proteoglycan (SLRP) family. SLRP class IV subfamily. As to quaternary structure, associates with collagen and binds to collagen fibrils. As to expression, expressed in cartilage, including articular knee cartilage, where it localizes to the extracellular space in the area immediately surrounding the chondrocytes, not detected in any other tissues (at protein level).

It is found in the secreted. The protein localises to the extracellular space. Its subcellular location is the extracellular matrix. Functionally, potential negative modulator of chondrocyte differentiation. Inhibits collagen fibrillogenesis in vitro. May influence chondrocyte's differentiation by acting on its cellular collagenous microenvironment. The polypeptide is Chondroadherin-like protein (Chadl) (Mus musculus (Mouse)).